A 521-amino-acid chain; its full sequence is MSGARTAHALVFLLGCSALALGVCSASLEHGEAEYYVAAVYEHRSVLSPNPLELSSRQQALELMKQNLDVYEQQVMAAAQKGAHIIVFPEDGIHGFNFTRTSIYPFLDLMPSPRLVSWNPCLEPFRFNDTEVLQRLSCMAIKGKMFLVANLGTKQPCLGSDPGCPQDGRYQFNTNVAFSDNGTLVGRYRKHNLYFEEAFDSPADVDLTTFDTPFAGKFGMFTCFDILFFDPAVRLLRDFEVKHIAYPTAWMNQLPLLAAIEIQKAFATAFGVTVLAANIHHPTLGMTGSGIHTPLKSFWYHNMDDPEGHLIIARVATNPQGLVGTENTTSEMDPSHRKFLKVLSGDPYCEKDAQEVRCDEAAKWNLNAPPTFHSEMMYDNFTLVPVWGKEGHLQVCSNSLCCHLLFERPALSKELYALGVFDGLHTVHGTYYVQACALVKCGGAGFETCGQEISEAEGLFDFHLWGNFSTLYVFPLFLTSGMTLDTPDQLGWESDHYFLRKRGLSSGLVTAALYGRLYERN.

The first 25 residues, 1-25 (MSGARTAHALVFLLGCSALALGVCS), serve as a signal peptide directing secretion. Residues 50 to 329 (NPLELSSRQQ…QGLVGTENTT (280 aa)) enclose the CN hydrolase domain. The active-site Proton acceptor is Glu-90. Residues Asn-128 and Asn-181 are each glycosylated (N-linked (GlcNAc...) asparagine). Catalysis depends on Lys-190, which acts as the Proton donor. The active-site Nucleophile is the Cys-223. The N-linked (GlcNAc...) asparagine glycan is linked to Asn-380.

The protein belongs to the carbon-nitrogen hydrolase superfamily. BTD/VNN family.

It localises to the secreted. The protein resides in the extracellular space. The catalysed reaction is biocytin + H2O = biotin + L-lysine. The enzyme catalyses biotin amide + H2O = biotin + NH4(+). Its function is as follows. Catalytic release of biotin from biocytin, the product of biotin-dependent carboxylases degradation. The chain is Biotinidase from Rattus norvegicus (Rat).